We begin with the raw amino-acid sequence, 110 residues long: uncharacterized protein (110 aa).

3 helical membrane-spanning segments follow: residues 4 to 26, 46 to 68, and 72 to 91; these read LVGGGLMIIAGILIKLFPPKSIN, ANRYSASLMILSGLVIAGMGLLL, and LFILQLILLIAACVITFMLT.

The protein resides in the cell membrane. This is an uncharacterized protein from Bacillus subtilis (strain 168).